Reading from the N-terminus, the 137-residue chain is Small ribosomal subunit protein uS11 (137 aa).

The interval 116 to 137 (EDVTPIPHDGTRPKGGRRGRRV) is disordered.

Belongs to the universal ribosomal protein uS11 family. As to quaternary structure, part of the 30S ribosomal subunit.

Located on the platform of the 30S subunit. The sequence is that of Small ribosomal subunit protein uS11 from Pyrococcus abyssi (strain GE5 / Orsay).